Reading from the N-terminus, the 238-residue chain is MSDKKYNVDEGEIAKFSRIADKWWDKSGEFKTLHDINPLRLDYIDGHADLRGKRVLDVGCGGGILAESMARRGAAFVKGIDMAEQSLETARLHAALNNVADIEYECIRVEDLAEAEPHSFDVVTCMEMMEHVPDPAAIVRACANLVKPDGMVFFSTINKNPKSYLHLIVAAEYLLKFVPKGTHDWKKFIAPAELARMCRQAGLDVADTKGMTYHVLSQTYALCDSTDVNYMFACRPAF.

Arg40, Gly59, Asp81, and Met126 together coordinate S-adenosyl-L-methionine.

The protein belongs to the methyltransferase superfamily. UbiG/COQ3 family.

It carries out the reaction a 3-demethylubiquinol + S-adenosyl-L-methionine = a ubiquinol + S-adenosyl-L-homocysteine + H(+). The enzyme catalyses a 3-(all-trans-polyprenyl)benzene-1,2-diol + S-adenosyl-L-methionine = a 2-methoxy-6-(all-trans-polyprenyl)phenol + S-adenosyl-L-homocysteine + H(+). Its pathway is cofactor biosynthesis; ubiquinone biosynthesis. Functionally, O-methyltransferase that catalyzes the 2 O-methylation steps in the ubiquinone biosynthetic pathway. The polypeptide is Ubiquinone biosynthesis O-methyltransferase (Neisseria meningitidis serogroup C (strain 053442)).